A 257-amino-acid chain; its full sequence is Imidazole glycerol phosphate synthase subunit HisF (257 aa).

Catalysis depends on residues Asp-12 and Asp-131.

This sequence belongs to the HisA/HisF family. Heterodimer of HisH and HisF.

It localises to the cytoplasm. The enzyme catalyses 5-[(5-phospho-1-deoxy-D-ribulos-1-ylimino)methylamino]-1-(5-phospho-beta-D-ribosyl)imidazole-4-carboxamide + L-glutamine = D-erythro-1-(imidazol-4-yl)glycerol 3-phosphate + 5-amino-1-(5-phospho-beta-D-ribosyl)imidazole-4-carboxamide + L-glutamate + H(+). Its pathway is amino-acid biosynthesis; L-histidine biosynthesis; L-histidine from 5-phospho-alpha-D-ribose 1-diphosphate: step 5/9. Functionally, IGPS catalyzes the conversion of PRFAR and glutamine to IGP, AICAR and glutamate. The HisF subunit catalyzes the cyclization activity that produces IGP and AICAR from PRFAR using the ammonia provided by the HisH subunit. This chain is Imidazole glycerol phosphate synthase subunit HisF, found in Marinobacter nauticus (strain ATCC 700491 / DSM 11845 / VT8) (Marinobacter aquaeolei).